The primary structure comprises 482 residues: Membrane-bound lytic murein transglycosylase F (482 aa).

A signal peptide spans 1–18; that stretch reads MKGLFLRIITALALLFWA. Residues 19-267 are non-LT domain; it reads IDMVFPWQFL…NLKEKYLGHI (249 aa). An LT domain region spans residues 268–482; that stretch reads SQFDYVDTRS…NLEEIKENED (215 aa). Glu312 is an active-site residue. Positions 457 to 470 are enriched in polar residues; it reads ENQTTNDNANNESA. Residues 457–482 form a disordered region; it reads ENQTTNDNANNESAVKNLEEIKENED. Residues 473–482 are compositionally biased toward basic and acidic residues; that stretch reads NLEEIKENED.

It in the N-terminal section; belongs to the bacterial solute-binding protein 3 family. In the C-terminal section; belongs to the transglycosylase Slt family.

It localises to the cell outer membrane. The catalysed reaction is Exolytic cleavage of the (1-&gt;4)-beta-glycosidic linkage between N-acetylmuramic acid (MurNAc) and N-acetylglucosamine (GlcNAc) residues in peptidoglycan, from either the reducing or the non-reducing ends of the peptidoglycan chains, with concomitant formation of a 1,6-anhydrobond in the MurNAc residue.. Murein-degrading enzyme that degrades murein glycan strands and insoluble, high-molecular weight murein sacculi, with the concomitant formation of a 1,6-anhydromuramoyl product. Lytic transglycosylases (LTs) play an integral role in the metabolism of the peptidoglycan (PG) sacculus. Their lytic action creates space within the PG sacculus to allow for its expansion as well as for the insertion of various structures such as secretion systems and flagella. In Haemophilus influenzae (strain PittGG), this protein is Membrane-bound lytic murein transglycosylase F.